A 428-amino-acid polypeptide reads, in one-letter code: Enolase 1 (428 aa).

Residues 38–58 (EVPSGASTGENEAVELRDGGS) are disordered. Residue Gln163 coordinates (2R)-2-phosphoglycerate. Glu205 functions as the Proton donor in the catalytic mechanism. Positions 242, 286, and 313 each coordinate Mg(2+). Lys338, Arg367, Ser368, and Lys389 together coordinate (2R)-2-phosphoglycerate. Catalysis depends on Lys338, which acts as the Proton acceptor.

It belongs to the enolase family. The cofactor is Mg(2+).

It is found in the cytoplasm. Its subcellular location is the secreted. It localises to the cell surface. It carries out the reaction (2R)-2-phosphoglycerate = phosphoenolpyruvate + H2O. It participates in carbohydrate degradation; glycolysis; pyruvate from D-glyceraldehyde 3-phosphate: step 4/5. In terms of biological role, catalyzes the reversible conversion of 2-phosphoglycerate (2-PG) into phosphoenolpyruvate (PEP). It is essential for the degradation of carbohydrates via glycolysis. The chain is Enolase 1 from Lactobacillus gasseri (strain ATCC 33323 / DSM 20243 / BCRC 14619 / CIP 102991 / JCM 1131 / KCTC 3163 / NCIMB 11718 / NCTC 13722 / AM63).